Here is a 292-residue protein sequence, read N- to C-terminus: Shikimate dehydrogenase (NADP(+)) (292 aa).

Residues 22–24 (SLS) and S69 contribute to the shikimate site. Catalysis depends on K73, which acts as the Proton acceptor. Residues N94 and D111 each coordinate shikimate. Residues 135-139 (GVGGA) and I236 each bind NADP(+). Y238 lines the shikimate pocket. Position 260 (G260) interacts with NADP(+).

The protein belongs to the shikimate dehydrogenase family. As to quaternary structure, homodimer.

The catalysed reaction is shikimate + NADP(+) = 3-dehydroshikimate + NADPH + H(+). It participates in metabolic intermediate biosynthesis; chorismate biosynthesis; chorismate from D-erythrose 4-phosphate and phosphoenolpyruvate: step 4/7. Involved in the biosynthesis of the chorismate, which leads to the biosynthesis of aromatic amino acids. Catalyzes the reversible NADPH linked reduction of 3-dehydroshikimate (DHSA) to yield shikimate (SA). In Streptococcus pyogenes serotype M3 (strain ATCC BAA-595 / MGAS315), this protein is Shikimate dehydrogenase (NADP(+)).